The chain runs to 148 residues: Snaclec B3/B5 (148 aa).

Positions 1–24 are cleaved as a signal peptide; sequence MGRFIFVSFGLLVVFLSLSGTGAA. Disulfide bonds link C27/C38, C55/C144, and C121/C136. In terms of domain architecture, C-type lectin spans 34 to 145; sequence YDQHCYKVFD…CRLLGHFVCK (112 aa).

Belongs to the snaclec family. As to quaternary structure, heterodimer; disulfide-linked. Expressed by the venom gland.

Its subcellular location is the secreted. Interferes with one step of hemostasis (modulation of platelet aggregation, or coagulation cascade, for example). The protein is Snaclec B3/B5 of Macrovipera lebetinus (Levantine viper).